We begin with the raw amino-acid sequence, 183 residues long: Ribulose bisphosphate carboxylase small subunit, chloroplastic (183 aa).

A chloroplast-targeting transit peptide spans Met-1 to Gln-59.

It belongs to the RuBisCO small chain family. As to quaternary structure, heterohexadecamer of 8 large and 8 small subunits.

It localises to the plastid. Its subcellular location is the chloroplast. In terms of biological role, ruBisCO catalyzes two reactions: the carboxylation of D-ribulose 1,5-bisphosphate, the primary event in carbon dioxide fixation, as well as the oxidative fragmentation of the pentose substrate. Both reactions occur simultaneously and in competition at the same active site. Although the small subunit is not catalytic it is essential for maximal activity. The sequence is that of Ribulose bisphosphate carboxylase small subunit, chloroplastic from Pyrus pyrifolia (Chinese pear).